A 572-amino-acid chain; its full sequence is Urease subunit alpha (572 aa).

The Urease domain maps to 131–572; it reads GGIDAHIHFI…LPLAQRYFLF (442 aa). Histidine 136, histidine 138, and lysine 219 together coordinate Ni(2+). Position 219 is an N6-carboxylysine (lysine 219). Histidine 221 contacts substrate. Ni(2+)-binding residues include histidine 248 and histidine 274. The active-site Proton donor is the histidine 322. A Ni(2+)-binding site is contributed by aspartate 362.

It belongs to the metallo-dependent hydrolases superfamily. Urease alpha subunit family. As to quaternary structure, heterotrimer of UreA (gamma), UreB (beta) and UreC (alpha) subunits. Three heterotrimers associate to form the active enzyme. Requires Ni cation as cofactor. In terms of processing, carboxylation allows a single lysine to coordinate two nickel ions.

The protein localises to the cytoplasm. The enzyme catalyses urea + 2 H2O + H(+) = hydrogencarbonate + 2 NH4(+). Its pathway is nitrogen metabolism; urea degradation; CO(2) and NH(3) from urea (urease route): step 1/1. This is Urease subunit alpha from Thermosynechococcus vestitus (strain NIES-2133 / IAM M-273 / BP-1).